The sequence spans 345 residues: Protein RecA (345 aa).

67 to 74 (GPESSGKT) lines the ATP pocket.

This sequence belongs to the RecA family.

The protein localises to the cytoplasm. Its function is as follows. Can catalyze the hydrolysis of ATP in the presence of single-stranded DNA, the ATP-dependent uptake of single-stranded DNA by duplex DNA, and the ATP-dependent hybridization of homologous single-stranded DNAs. It interacts with LexA causing its activation and leading to its autocatalytic cleavage. The polypeptide is Protein RecA (Acidothermus cellulolyticus (strain ATCC 43068 / DSM 8971 / 11B)).